A 111-amino-acid chain; its full sequence is MDVLRSIALFVLAALLEIGGAWLVWQGVREHRGLAWIGAGVIALGLYGFAATLQPEAQFGRVLAAYGGVFVAGSLLWAAVVDGYRPDRFDVAGALVCLVGVGIVMYAPRPS.

4 helical membrane passes run 7 to 27 (IALF…VWQG), 33 to 53 (GLAW…AATL), 62 to 82 (VLAA…AVVD), and 88 to 108 (RFDV…MYAP).

Belongs to the UPF0060 family.

The protein localises to the cell membrane. The chain is UPF0060 membrane protein Krad_3114 from Kineococcus radiotolerans (strain ATCC BAA-149 / DSM 14245 / SRS30216).